Consider the following 794-residue polypeptide: Lon protease (794 aa).

One can recognise a Lon N-terminal domain in the interval 29-222 (VPLLPLRGVL…TLISIIQDEQ (194 aa)). 374 to 381 (GPPGVGKT) lines the ATP pocket. The 182-residue stretch at 610-791 (TDQVGMATGL…DEVLEHALVG (182 aa)) folds into the Lon proteolytic domain. Residues S697 and K740 contribute to the active site.

This sequence belongs to the peptidase S16 family. In terms of assembly, homohexamer. Organized in a ring with a central cavity.

It localises to the cytoplasm. It catalyses the reaction Hydrolysis of proteins in presence of ATP.. Its function is as follows. ATP-dependent serine protease that mediates the selective degradation of mutant and abnormal proteins as well as certain short-lived regulatory proteins. Required for cellular homeostasis and for survival from DNA damage and developmental changes induced by stress. Degrades polypeptides processively to yield small peptide fragments that are 5 to 10 amino acids long. Binds to DNA in a double-stranded, site-specific manner. The protein is Lon protease of Bacillus thuringiensis (strain Al Hakam).